The chain runs to 310 residues: 4-diphosphocytidyl-2-C-methyl-D-erythritol kinase (310 aa).

Residue Lys-11 is part of the active site. 95 to 105 (PIGAGLAGGSA) is an ATP binding site. The active site involves Asp-137.

Belongs to the GHMP kinase family. IspE subfamily.

The enzyme catalyses 4-CDP-2-C-methyl-D-erythritol + ATP = 4-CDP-2-C-methyl-D-erythritol 2-phosphate + ADP + H(+). It functions in the pathway isoprenoid biosynthesis; isopentenyl diphosphate biosynthesis via DXP pathway; isopentenyl diphosphate from 1-deoxy-D-xylulose 5-phosphate: step 3/6. Catalyzes the phosphorylation of the position 2 hydroxy group of 4-diphosphocytidyl-2C-methyl-D-erythritol. The chain is 4-diphosphocytidyl-2-C-methyl-D-erythritol kinase from Acaryochloris marina (strain MBIC 11017).